The sequence spans 285 residues: MKYIGAHVSAAGGLANAAIRAAEIDATAFALFTKNQRQWRAAPLTTQTIDEFKAACEKYHYTSAQILPHDSYLINLGHPVTEALEKSRDAFIDEMQRCEQLGLSLLNFHPGSHLMQISEEDCLARIAESINIALDKTQGVTAVIENTAGQGSNLGFKFEHLAAIIDGVEDKSRVGVCIDTCHAFAAGYDLRTPAECEKTFADFARTVGFKYLRGMHLNDAKSTFGSRVDRHHSLGEGNIGHDAFRWIMQDDRFDGIPLILETINPDIWAEEIAWLKAQQTEKAVA.

The Zn(2+) site is built by His-69, His-109, Glu-145, Asp-179, His-182, His-216, Asp-229, His-231, and Glu-261.

This sequence belongs to the AP endonuclease 2 family. It depends on Zn(2+) as a cofactor.

It carries out the reaction Endonucleolytic cleavage to 5'-phosphooligonucleotide end-products.. Its function is as follows. Endonuclease IV plays a role in DNA repair. It cleaves phosphodiester bonds at apurinic or apyrimidinic (AP) sites, generating a 3'-hydroxyl group and a 5'-terminal sugar phosphate. The polypeptide is Probable endonuclease 4 (Shigella dysenteriae serotype 1 (strain Sd197)).